Here is a 183-residue protein sequence, read N- to C-terminus: Ras-related protein Rap-2c (183 aa).

10–17 (GSGGVGKS) contributes to the GTP binding site. Positions 32–40 (YDPTIEDFY) match the Effector region motif. GTP contacts are provided by residues 57 to 61 (DTAGT) and 116 to 119 (NKVD). S-palmitoyl cysteine attachment occurs at residues C176 and C177. C180 carries the cysteine methyl ester modification. Residue C180 is the site of S-geranylgeranyl cysteine attachment. A propeptide spans 181–183 (VVQ) (removed in mature form).

It belongs to the small GTPase superfamily. Ras family. Palmitoylated. Palmitoylation is required for association with recycling endosome membranes and activation of TNIK.

Its subcellular location is the cytoplasm. It is found in the recycling endosome membrane. It catalyses the reaction GTP + H2O = GDP + phosphate + H(+). In terms of biological role, small GTP-binding protein which cycles between a GDP-bound inactive and a GTP-bound active form. May play a role in cytoskeletal rearrangements and regulate cell spreading through activation of the effector TNIK. May play a role in SRE-mediated gene transcription. The sequence is that of Ras-related protein Rap-2c (RAP2C) from Bos taurus (Bovine).